The following is a 494-amino-acid chain: NADH-ubiquinone oxidoreductase chain 4 (494 aa).

Helical transmembrane passes span Ile-6–Tyr-26, Thr-41–Phe-61, Ile-87–Val-107, Val-118–Val-138, Ile-141–Leu-161, Phe-172–Met-192, Ala-207–Val-227, Pro-246–Phe-266, Tyr-280–Leu-300, Thr-302–Leu-322, Ile-336–Ile-356, Leu-375–Leu-395, Val-415–Phe-435, and Phe-460–Ile-480.

Belongs to the complex I subunit 4 family.

It is found in the mitochondrion membrane. The catalysed reaction is a ubiquinone + NADH + 5 H(+)(in) = a ubiquinol + NAD(+) + 4 H(+)(out). In terms of biological role, core subunit of the mitochondrial membrane respiratory chain NADH dehydrogenase (Complex I) that is believed to belong to the minimal assembly required for catalysis. Complex I functions in the transfer of electrons from NADH to the respiratory chain. The immediate electron acceptor for the enzyme is believed to be ubiquinone. This Trichophyton rubrum (Athlete's foot fungus) protein is NADH-ubiquinone oxidoreductase chain 4 (ND4).